Consider the following 349-residue polypeptide: MASKKVCIVGSGNWGSAIAKIVGGNAAQLAQFDPRVTMWVFEEDIGGKKLTEIINTQHENVKYLPGHKLPPNVVAVPDVVQAAEDADILIFVVPHQFIGKICDQLKGHLKANATGISLIKGVDEGPNGLKLISEVIGERLGIPMSVLMGANIASEVADEKFCETTIGCKDPAQGQLLKELMQTPNFRITVVQEVDTVEICGALKNVVAVGAGFCDGLGFGDNTKAAVIRLGLMEMIAFAKLFCSGPVSSATFLESCGVADLITTCYGGRNRKVAEAFARTGKSIEQLEKELLNGQKLQGPETARELYSILQHKGLVDKFPLFMAVYKVCYEGQPVGEFIHCLQNHPEHM.

NAD(+) contacts are provided by residues 10–15 (GSGNWG), phenylalanine 41, and phenylalanine 97. Residue lysine 120 participates in substrate binding. Alanine 153 is an NAD(+) binding site. Position 154 is a phosphoserine (serine 154). Lysine 204 (proton acceptor) is an active-site residue. Arginine 269 is a binding site for NAD(+). A substrate-binding site is contributed by 269-270 (RN). Residue lysine 289 is modified to N6-succinyllysine. NAD(+)-binding residues include lysine 296 and glutamine 298. Phosphotyrosine is present on tyrosine 326.

Belongs to the NAD-dependent glycerol-3-phosphate dehydrogenase family. In terms of assembly, homodimer. In terms of tissue distribution, expressed in liver (at protein level).

The protein resides in the cytoplasm. It carries out the reaction sn-glycerol 3-phosphate + NAD(+) = dihydroxyacetone phosphate + NADH + H(+). Its activity is regulated as follows. Inhibited by zinc ions and sulfate. In terms of biological role, has glycerol-3-phosphate dehydrogenase activity. In Homo sapiens (Human), this protein is Glycerol-3-phosphate dehydrogenase [NAD(+)], cytoplasmic.